Here is a 130-residue protein sequence, read N- to C-terminus: Small ribosomal subunit protein uS9 (130 aa).

The protein belongs to the universal ribosomal protein uS9 family.

This chain is Small ribosomal subunit protein uS9, found in Streptococcus suis (strain 98HAH33).